A 638-amino-acid chain; its full sequence is MDNNHKGPNDPNSKKPLLQNPLLLIAIFGIIIFVAMRVMNSDEGFGDRFLSTSTKNISYHEMKELIEKKEVDSVSIGQTLIKAISKEGNNKTIYVAKRVPDLSLVPLLDSQKINYSGFSESNFFADILGWLLPVLVILGLWMFMASRMQKNMGGGIFGMGSSKKLINAEKPKVRFNDMAGNEEAKEEVVEIVDFLKYPDRYASLGAKIPKGVLLVGPPGTGKTLLAKAVAGEASVPFFSMGGSSFIEMFVGLGASRVRDLFDIAKKEAPSIIFIDEIDAIGKSRAAGGMISGNDEREQTLNQLLAEMDGFGSENAPVIVLAATNRPEILDPALLRPGRFDRQVLVDKPDFKGRVEILKVHIKPVKLANDVDLQEIAKLTAGLAGADLANIINEAALLAGRNNQKEVKQQHLKEAVERGIAGLEKKSRRISPKEKKIVAYHESGHAVISEMTKGSARVNKVSIIPRGMAALGYTLNTPEENKYLMQKHELIAEIDVLLGGRAAEDVFLQEISTGASNDLERATDIIKGMVSYYGMSDVSGLMVLEKQRNSFLGGGFGSGREFSEKMAEEMDSFIKNLLEERYVHVKQTLSDYKDAIEVMVNELFEKEVITGERVREIISEYEVSHNLQTRLVPLEEHAS.

Residues 1 to 15 are Cytoplasmic-facing; sequence MDNNHKGPNDPNSKK. A helical membrane pass occupies residues 16–36; sequence PLLQNPLLLIAIFGIIIFVAM. Over 37-122 the chain is Periplasmic; it reads RVMNSDEGFG…INYSGFSESN (86 aa). The chain crosses the membrane as a helical span at residues 123-143; that stretch reads FFADILGWLLPVLVILGLWMF. The Cytoplasmic segment spans residues 144–638; the sequence is MASRMQKNMG…RLVPLEEHAS (495 aa). An ATP-binding site is contributed by 216 to 223; it reads GPPGTGKT. Position 440 (His440) interacts with Zn(2+). Glu441 is an active-site residue. Zn(2+)-binding residues include His444 and Asp517.

The protein in the central section; belongs to the AAA ATPase family. This sequence in the C-terminal section; belongs to the peptidase M41 family. Homohexamer. Zn(2+) serves as cofactor.

It is found in the cell inner membrane. Its function is as follows. Acts as a processive, ATP-dependent zinc metallopeptidase for both cytoplasmic and membrane proteins. Plays a role in the quality control of integral membrane proteins. The chain is ATP-dependent zinc metalloprotease FtsH from Helicobacter felis (strain ATCC 49179 / CCUG 28539 / NCTC 12436 / CS1).